A 235-amino-acid polypeptide reads, in one-letter code: Probable transcriptional regulatory protein Ccon26_04940 (235 aa).

It belongs to the TACO1 family.

It is found in the cytoplasm. The chain is Probable transcriptional regulatory protein Ccon26_04940 from Campylobacter concisus (strain 13826).